The following is a 309-amino-acid chain: Foldase protein PrsA 2 (309 aa).

The signal sequence occupies residues 1–22; it reads MKQMNKLITGVVTLATVVTLSA. The N-palmitoyl cysteine moiety is linked to residue Cys23. Cys23 carries the S-diacylglycerol cysteine lipid modification. The PpiC domain occupies 146-241; it reads TPTMTAEIMQ…RTYHIIKVTK (96 aa).

This sequence belongs to the PrsA family.

It is found in the cell membrane. The enzyme catalyses [protein]-peptidylproline (omega=180) = [protein]-peptidylproline (omega=0). Plays a major role in protein secretion by helping the post-translocational extracellular folding of several secreted proteins. The sequence is that of Foldase protein PrsA 2 (prsA2) from Streptococcus pyogenes serotype M1.